Reading from the N-terminus, the 354-residue chain is Pyruvate dehydrogenase E1 component subunit alpha (354 aa).

The interval 1 to 29 (MAKATQDSNRPHKADVGSAIPNHDLPPIP) is disordered.

As to quaternary structure, heterodimer of an alpha and a beta chain. It depends on thiamine diphosphate as a cofactor.

The enzyme catalyses N(6)-[(R)-lipoyl]-L-lysyl-[protein] + pyruvate + H(+) = N(6)-[(R)-S(8)-acetyldihydrolipoyl]-L-lysyl-[protein] + CO2. Functionally, the pyruvate dehydrogenase complex catalyzes the overall conversion of pyruvate to acetyl-CoA and CO(2). It contains multiple copies of three enzymatic components: pyruvate dehydrogenase (E1), dihydrolipoamide acetyltransferase (E2) and lipoamide dehydrogenase (E3). The sequence is that of Pyruvate dehydrogenase E1 component subunit alpha (pdhA) from Zymomonas mobilis subsp. mobilis (strain ATCC 31821 / ZM4 / CP4).